Consider the following 590-residue polypeptide: Monoterepene synthase TPS1, chloropastic (590 aa).

Residues 1–42 (MALNTFLHFPPCSLSSFSCAVPKLPLAIFHKTMARQIRCPRA) constitute a chloroplast transit peptide. Residues Arg-304, Asp-341, Asp-345, Arg-483, and Asp-486 each coordinate (2E)-geranyl diphosphate. Residues Asp-341 and Asp-345 each coordinate Mg(2+). Residues 341 to 345 (DDMYD) carry the DDXXD motif motif. 3 residues coordinate Mg(2+): Asp-486, Thr-490, and Glu-494.

Belongs to the terpene synthase family. Tpsb subfamily. As to quaternary structure, monomer. It depends on Mg(2+) as a cofactor.

The protein localises to the plastid. The protein resides in the chloroplast. The catalysed reaction is (2E)-geranyl diphosphate = beta-thujene + diphosphate. It carries out the reaction (2E)-geranyl diphosphate = sabinene + diphosphate. It catalyses the reaction (2E)-geranyl diphosphate = beta-pinene + diphosphate. The enzyme catalyses (2E)-geranyl diphosphate = alpha-terpinene + diphosphate. Its pathway is secondary metabolite biosynthesis; terpenoid biosynthesis. Functionally, monoterpene synthase involved in the biosynthesis of volatile organic compounds. Mediates the conversion of (2E)-geranyl diphosphate (GPP) into beta-thujene, sabinene, beta-pinene and alpha-terpinene. Does not use (2E,6E)-farnesyl diphosphate (FPP) as substrate. The chain is Monoterepene synthase TPS1, chloropastic from Cananga odorata (Ylang-ylang tree).